Consider the following 596-residue polypeptide: Beta-glucuronidase (596 aa).

2 residues coordinate D-glucuronate: Asp168 and Asn412. The active-site Proton donor is Glu413. Residues Asn464, Tyr470, Glu502, Trp547, and Lys566 each coordinate D-glucuronate. Glu502 functions as the Nucleophile in the catalytic mechanism. The short motif at 564–566 is the N-K motif element; the sequence is NKK.

The protein belongs to the glycosyl hydrolase 2 family.

It localises to the cytoplasm. It catalyses the reaction a beta-D-glucuronoside + H2O = D-glucuronate + an alcohol. In terms of biological role, displays beta-glucuronidase activity with the artificial substrate p-nitrophenyl-beta-D-glucuronide (PNPG). Is probably involved in the metabolism of oligosaccharides containing the 3-O-beta-D-glucopyranosyl-beta-D-glucuronide structure released from bacterial and plant acidic carbohydrates. This chain is Beta-glucuronidase, found in Paenibacillus borealis.